The primary structure comprises 97 residues: Co-chaperonin GroES (97 aa).

This sequence belongs to the GroES chaperonin family. In terms of assembly, heptamer of 7 subunits arranged in a ring. Interacts with the chaperonin GroEL.

It localises to the cytoplasm. Its function is as follows. Together with the chaperonin GroEL, plays an essential role in assisting protein folding. The GroEL-GroES system forms a nano-cage that allows encapsulation of the non-native substrate proteins and provides a physical environment optimized to promote and accelerate protein folding. GroES binds to the apical surface of the GroEL ring, thereby capping the opening of the GroEL channel. This is Co-chaperonin GroES from Escherichia fergusonii (strain ATCC 35469 / DSM 13698 / CCUG 18766 / IAM 14443 / JCM 21226 / LMG 7866 / NBRC 102419 / NCTC 12128 / CDC 0568-73).